The primary structure comprises 280 residues: 4-diphosphocytidyl-2-C-methyl-D-erythritol kinase (280 aa).

The active site involves K8. Residue 91 to 101 (PVAAGLAGGSA) coordinates ATP. D133 is a catalytic residue.

This sequence belongs to the GHMP kinase family. IspE subfamily.

The enzyme catalyses 4-CDP-2-C-methyl-D-erythritol + ATP = 4-CDP-2-C-methyl-D-erythritol 2-phosphate + ADP + H(+). It participates in isoprenoid biosynthesis; isopentenyl diphosphate biosynthesis via DXP pathway; isopentenyl diphosphate from 1-deoxy-D-xylulose 5-phosphate: step 3/6. In terms of biological role, catalyzes the phosphorylation of the position 2 hydroxy group of 4-diphosphocytidyl-2C-methyl-D-erythritol. This is 4-diphosphocytidyl-2-C-methyl-D-erythritol kinase from Clostridium acetobutylicum (strain ATCC 824 / DSM 792 / JCM 1419 / IAM 19013 / LMG 5710 / NBRC 13948 / NRRL B-527 / VKM B-1787 / 2291 / W).